We begin with the raw amino-acid sequence, 122 residues long: Large ribosomal subunit protein uL14 (122 aa).

This sequence belongs to the universal ribosomal protein uL14 family. In terms of assembly, part of the 50S ribosomal subunit. Forms a cluster with proteins L3 and L19. In the 70S ribosome, L14 and L19 interact and together make contacts with the 16S rRNA in bridges B5 and B8.

Functionally, binds to 23S rRNA. Forms part of two intersubunit bridges in the 70S ribosome. The polypeptide is Large ribosomal subunit protein uL14 (Rhodospirillum rubrum (strain ATCC 11170 / ATH 1.1.1 / DSM 467 / LMG 4362 / NCIMB 8255 / S1)).